The sequence spans 541 residues: Chaperonin GroEL 2 (541 aa).

ATP-binding positions include 29-32 (TLGP), 86-90 (DGTTT), Gly-413, 476-478 (NAA), and Asp-492.

It belongs to the chaperonin (HSP60) family. As to quaternary structure, forms a cylinder of 14 subunits composed of two heptameric rings stacked back-to-back. Interacts with the co-chaperonin GroES.

It localises to the secreted. Its subcellular location is the capsule. The protein localises to the cell surface. The protein resides in the cell wall. The catalysed reaction is ATP + H2O + a folded polypeptide = ADP + phosphate + an unfolded polypeptide.. Together with its co-chaperonin GroES, plays an essential role in assisting protein folding. The GroEL-GroES system forms a nano-cage that allows encapsulation of the non-native substrate proteins and provides a physical environment optimized to promote and accelerate protein folding. The chain is Chaperonin GroEL 2 from Mycobacterium leprae (strain TN).